A 298-amino-acid chain; its full sequence is N-acetylmuramic acid 6-phosphate etherase (298 aa).

An SIS domain is found at 54–217 (CISAIKNHGR…STVTMIKLGK (164 aa)). Glutamate 82 functions as the Proton donor in the catalytic mechanism. Residue glutamate 113 is part of the active site.

This sequence belongs to the GCKR-like family. MurNAc-6-P etherase subfamily. As to quaternary structure, homodimer.

It carries out the reaction N-acetyl-D-muramate 6-phosphate + H2O = N-acetyl-D-glucosamine 6-phosphate + (R)-lactate. It participates in amino-sugar metabolism; N-acetylmuramate degradation. In terms of biological role, specifically catalyzes the cleavage of the D-lactyl ether substituent of MurNAc 6-phosphate, producing GlcNAc 6-phosphate and D-lactate. The chain is N-acetylmuramic acid 6-phosphate etherase from Petrotoga mobilis (strain DSM 10674 / SJ95).